A 914-amino-acid polypeptide reads, in one-letter code: Translation initiation factor IF-2 (914 aa).

Disordered stretches follow at residues 52–84 (GGGK…VKAP) and 98–326 (AGGN…GVRL). Over residues 57-68 (AEGAAKAPAKAA) the composition is skewed to low complexity. The span at 69–84 (AKGDAKTAAKGDVKAP) shows a compositional bias: basic and acidic residues. Over residues 98 to 138 (AGGNGEAAAPPAQPGGTATTPAAQATPEAPARPGPAAARPS) the composition is skewed to low complexity. Composition is skewed to pro residues over residues 139 to 169 (APAP…PAPK) and 193 to 207 (PRPV…PGAP). Over residues 236-296 (RPGGGRPGGP…GAAGAFGRPG (61 aa)) the composition is skewed to gly residues. Over residues 300 to 309 (RRGRKSKRQK) the composition is skewed to basic residues. The region spanning 421–581 (TRPPVVTVMG…AVLLTADAAL (161 aa)) is the tr-type G domain. Residues 430-437 (GHVDHGKT), 469-473 (DTPGH), and 523-526 (NKID) contribute to the GTP site.

Belongs to the TRAFAC class translation factor GTPase superfamily. Classic translation factor GTPase family. IF-2 subfamily.

It is found in the cytoplasm. One of the essential components for the initiation of protein synthesis. Protects formylmethionyl-tRNA from spontaneous hydrolysis and promotes its binding to the 30S ribosomal subunits. Also involved in the hydrolysis of GTP during the formation of the 70S ribosomal complex. In Mycobacterium avium (strain 104), this protein is Translation initiation factor IF-2.